Reading from the N-terminus, the 83-residue chain is Acyl carrier protein (83 aa).

The 76-residue stretch at 2-77 folds into the Carrier domain; that stretch reads STIEEKVKTI…AAIDFISNSH (76 aa). The residue at position 37 (Ser37) is an O-(pantetheine 4'-phosphoryl)serine.

It belongs to the acyl carrier protein (ACP) family. In terms of processing, 4'-phosphopantetheine is transferred from CoA to a specific serine of apo-ACP by AcpS. This modification is essential for activity because fatty acids are bound in thioester linkage to the sulfhydryl of the prosthetic group.

Its subcellular location is the cytoplasm. It participates in lipid metabolism; fatty acid biosynthesis. In terms of biological role, carrier of the growing fatty acid chain in fatty acid biosynthesis. The chain is Acyl carrier protein from Blochmanniella pennsylvanica (strain BPEN).